Reading from the N-terminus, the 588-residue chain is Catechol oxidase B, chloroplastic (588 aa).

A chloroplast-targeting transit peptide spans Ser1–Ala88. Cystine bridges form between Cys99–Cys115 and Cys114–Cys181. Cu cation contacts are provided by His180, His198, His207, His329, His333, and His364. Residues Cys184–His198 constitute a cross-link (2'-(S-cysteinyl)-histidine (Cys-His)).

It belongs to the tyrosinase family. The cofactor is Cu(2+).

The protein localises to the plastid. The protein resides in the chloroplast thylakoid lumen. The catalysed reaction is 2 catechol + O2 = 2 1,2-benzoquinone + 2 H2O. Functionally, catalyzes the oxidation of mono- and o-diphenols to o-diquinones. This Solanum tuberosum (Potato) protein is Catechol oxidase B, chloroplastic.